A 732-amino-acid chain; its full sequence is Catalase-peroxidase (732 aa).

The disordered stretch occupies residues 1–23 (MSEQSKCPVTGRTAGHPVAGGGM). The tryptophyl-tyrosyl-methioninium (Trp-Tyr) (with M-246) cross-link spans 97-220 (WHSAGTYRTS…LAAVQMGLIY (124 aa)). The active-site Proton acceptor is histidine 98. The tryptophyl-tyrosyl-methioninium (Tyr-Met) (with W-97) cross-link spans 220–246 (YVNPEGPDGNPDPVAAGRDIRETFARM). Heme b is bound at residue histidine 261.

This sequence belongs to the peroxidase family. Peroxidase/catalase subfamily. Homodimer or homotetramer. The cofactor is heme b. Formation of the three residue Trp-Tyr-Met cross-link is important for the catalase, but not the peroxidase activity of the enzyme.

It catalyses the reaction H2O2 + AH2 = A + 2 H2O. It carries out the reaction 2 H2O2 = O2 + 2 H2O. Bifunctional enzyme with both catalase and broad-spectrum peroxidase activity. In Chlorobium limicola (strain DSM 245 / NBRC 103803 / 6330), this protein is Catalase-peroxidase.